Reading from the N-terminus, the 92-residue chain is PqqA binding protein (92 aa).

This sequence belongs to the PqqD family. In terms of assembly, monomer. Interacts with PqqE.

It functions in the pathway cofactor biosynthesis; pyrroloquinoline quinone biosynthesis. In terms of biological role, functions as a PqqA binding protein and presents PqqA to PqqE, in the pyrroloquinoline quinone (PQQ) biosynthetic pathway. The polypeptide is PqqA binding protein (Xanthomonas euvesicatoria pv. vesicatoria (strain 85-10) (Xanthomonas campestris pv. vesicatoria)).